The following is a 361-amino-acid chain: Transmembrane protein 116 (361 aa).

7 helical membrane-spanning segments follow: residues 29 to 49 (WIQM…ILYA), 64 to 84 (FLLS…GLLF), 103 to 123 (TLYM…YTGL), 147 to 167 (LGPV…FVAG), 210 to 230 (CMAI…IFMG), 261 to 281 (MVLY…LATM), and 295 to 315 (VALY…NCLV).

It localises to the membrane. In Danio rerio (Zebrafish), this protein is Transmembrane protein 116 (tmem116).